The chain runs to 188 residues: GTP cyclohydrolase 1 (188 aa).

Residues Cys-76, His-79, and Cys-148 each coordinate Zn(2+).

The protein belongs to the GTP cyclohydrolase I family. In terms of assembly, homomer.

The enzyme catalyses GTP + H2O = 7,8-dihydroneopterin 3'-triphosphate + formate + H(+). It participates in cofactor biosynthesis; 7,8-dihydroneopterin triphosphate biosynthesis; 7,8-dihydroneopterin triphosphate from GTP: step 1/1. This is GTP cyclohydrolase 1 from Pelotomaculum thermopropionicum (strain DSM 13744 / JCM 10971 / SI).